A 388-amino-acid chain; its full sequence is 3-sulfinopropanoyl-CoA desulfinase (388 aa).

FAD-binding positions include 121–124, serine 130, and 153–156; these read ICIT and HWIT. Residue 240–241 coordinates substrate; sequence YN. FAD contacts are provided by residues arginine 269, glutamine 336, 363 to 367, and glutamine 384; that span reads GGTAQ.

Belongs to the acyl-CoA dehydrogenase family. As to quaternary structure, homotrimer or homotetramer. It depends on FAD as a cofactor.

The catalysed reaction is 3-sulfinopropanoyl-CoA + H2O = propanoyl-CoA + sulfite + H(+). Functionally, catalyzes the conversion 3-sulfinopropanoyl-CoA (3SP-CoA) to propanoyl-CoA by abstraction of sulfite. Does not show dehydrogenase activity. In Paraburkholderia xenovorans (strain LB400), this protein is 3-sulfinopropanoyl-CoA desulfinase.